The chain runs to 591 residues: uncharacterized protein (591 aa).

Positions 1-30 (MGKLLFGKLVFKKSLFLLSGMSSLAVFLTA) are cleaved as a signal peptide. A lipid anchor (N-palmitoyl cysteine) is attached at C31. A lipid anchor (S-diacylglycerol cysteine) is attached at C31. The segment covering 476–488 (KKKLSEVATKKNE) has biased composition (basic and acidic residues). Disordered stretches follow at residues 476 to 497 (KKKL…NGSN) and 510 to 535 (SSSS…DNDG). The segment covering 510-523 (SSSSTSMRNGSSDS) has biased composition (low complexity).

This sequence to T.pallidum TmpC.

It is found in the cell membrane. This is an uncharacterized protein from Mycoplasma genitalium (strain ATCC 33530 / DSM 19775 / NCTC 10195 / G37) (Mycoplasmoides genitalium).